A 309-amino-acid chain; its full sequence is Ribonuclease Z (309 aa).

Residues histidine 63, histidine 65, aspartate 67, histidine 68, histidine 145, aspartate 216, and histidine 274 each contribute to the Zn(2+) site. The active-site Proton acceptor is aspartate 67.

This sequence belongs to the RNase Z family. As to quaternary structure, homodimer. The cofactor is Zn(2+).

The catalysed reaction is Endonucleolytic cleavage of RNA, removing extra 3' nucleotides from tRNA precursor, generating 3' termini of tRNAs. A 3'-hydroxy group is left at the tRNA terminus and a 5'-phosphoryl group is left at the trailer molecule.. Its function is as follows. Zinc phosphodiesterase, which displays some tRNA 3'-processing endonuclease activity. Probably involved in tRNA maturation, by removing a 3'-trailer from precursor tRNA. The chain is Ribonuclease Z from Streptococcus pneumoniae (strain 70585).